A 179-amino-acid chain; its full sequence is Large ribosomal subunit protein bL19 (179 aa).

Belongs to the bacterial ribosomal protein bL19 family.

Its function is as follows. This protein is located at the 30S-50S ribosomal subunit interface and may play a role in the structure and function of the aminoacyl-tRNA binding site. The polypeptide is Large ribosomal subunit protein bL19 (Rhizobium johnstonii (strain DSM 114642 / LMG 32736 / 3841) (Rhizobium leguminosarum bv. viciae)).